The following is a 66-amino-acid chain: Toxin Boma6b (66 aa).

The LCN-type CS-alpha/beta domain maps to 2-64 (RDAYIAQNYN…VPIKVEGKCH (63 aa)). Intrachain disulfides connect cysteine 12–cysteine 63, cysteine 16–cysteine 36, cysteine 22–cysteine 46, and cysteine 26–cysteine 48.

It belongs to the long (4 C-C) scorpion toxin superfamily. Sodium channel inhibitor family. Alpha subfamily. Expressed by the venom gland.

It localises to the secreted. Its function is as follows. Alpha toxins bind voltage-independently at site-3 of sodium channels (Nav) and inhibit the inactivation of the activated channels, thereby blocking neuronal transmission. This is Toxin Boma6b from Buthus occitanus mardochei (Moroccan scorpion).